Reading from the N-terminus, the 150-residue chain is D-aminoacyl-tRNA deacylase (150 aa).

Positions 138–139 (GP) match the Gly-cisPro motif, important for rejection of L-amino acids motif.

The protein belongs to the DTD family. In terms of assembly, homodimer.

The protein resides in the cytoplasm. The catalysed reaction is glycyl-tRNA(Ala) + H2O = tRNA(Ala) + glycine + H(+). The enzyme catalyses a D-aminoacyl-tRNA + H2O = a tRNA + a D-alpha-amino acid + H(+). Its function is as follows. An aminoacyl-tRNA editing enzyme that deacylates mischarged D-aminoacyl-tRNAs. Also deacylates mischarged glycyl-tRNA(Ala), protecting cells against glycine mischarging by AlaRS. Acts via tRNA-based rather than protein-based catalysis; rejects L-amino acids rather than detecting D-amino acids in the active site. By recycling D-aminoacyl-tRNA to D-amino acids and free tRNA molecules, this enzyme counteracts the toxicity associated with the formation of D-aminoacyl-tRNA entities in vivo and helps enforce protein L-homochirality. This chain is D-aminoacyl-tRNA deacylase, found in Bacteroides fragilis (strain ATCC 25285 / DSM 2151 / CCUG 4856 / JCM 11019 / LMG 10263 / NCTC 9343 / Onslow / VPI 2553 / EN-2).